Consider the following 291-residue polypeptide: MKKTNKRPDGRKFQKGGKPFRSDKGEGRGRMNNKKKGSVNAGLDRKVLVEPHPRFPGVYISRGKEDLLLTRNLVPGVSVYGEKRVAVDLEGMKVEYRVWNAYRSKLAAGIVCGAENIHMEPGSKVLYLGASSGTTVSHVSDIVGKDGVVYAVEFSERSGRDLINMSMKRPNIVPIIEDARYPSRYRMLVPIVDCIFSDVSQPDQTRIVALNAQYFLKEGGGVDVSIKANCVNSAVPAETVFADEVNILRKNSIRPKEQVTLEPFEKDHAMIIGRFKLSASEEKRQSSQKKD.

Basic and acidic residues-rich tracts occupy residues 1 to 12 (MKKTNKRPDGRK) and 20 to 29 (FRSDKGEGRG). The disordered stretch occupies residues 1–45 (MKKTNKRPDGRKFQKGGKPFRSDKGEGRGRMNNKKKGSVNAGLDR). Asymmetric dimethylarginine is present on residues Arg-28 and Arg-62. Residues 134-135 (TT), 153-154 (EF), 178-179 (DA), and 198-201 (DVSQ) each bind S-adenosyl-L-methionine.

It belongs to the methyltransferase superfamily. Fibrillarin family. In terms of assembly, component of box C/D small nucleolar ribonucleoprotein (snoRNP) particles.

The protein localises to the nucleus. It is found in the nucleolus. The enzyme catalyses L-glutaminyl-[histone H2A] + S-adenosyl-L-methionine = N(5)-methyl-L-glutaminyl-[histone H2A] + S-adenosyl-L-homocysteine + H(+). Functionally, S-adenosyl-L-methionine-dependent methyltransferase that has the ability to methylate both RNAs and proteins. Involved in pre-rRNA processing. Utilizes the methyl donor S-adenosyl-L-methionine to catalyze the site-specific 2'-hydroxyl methylation of ribose moieties in pre-ribosomal RNA. Site specificity is provided by a guide RNA that base pairs with the substrate. Methylation occurs at a characteristic distance from the sequence involved in base pairing with the guide RNA. Also acts as a protein methyltransferase by mediating methylation of 'Gln-105' of histone H2A (H2AQ105me), a modification that impairs binding of the FACT complex and is specifically present at 35S ribosomal DNA locus. The chain is rRNA 2'-O-methyltransferase fibrillarin (NOP1) from Encephalitozoon cuniculi (strain GB-M1) (Microsporidian parasite).